The primary structure comprises 446 residues: Citrate/sodium symporter (446 aa).

The next 5 membrane-spanning stretches (helical) occupy residues 23 to 43 (IFGM…LSHF), 46 to 66 (AIPT…AIFG), 79 to 99 (IGGA…AGIF), 110 to 130 (VMDK…GAIL), and 148 to 168 (ILAG…CFGI). Residues I181 and G183 each contribute to the Na(+) site. Citrate is bound by residues N186 and G187. The next 5 membrane-spanning stretches (helical) occupy residues 213–233 (IAIL…LDMI), 267–287 (ETAV…VVAK), 289–309 (ILPS…LIVA), 335–355 (QLLW…QEII), and 364–384 (VIAA…GWLI). Residues M399 and N401 each coordinate Na(+). Positions 402, 404, 405, and 428 each coordinate citrate. The chain crosses the membrane as a helical span at residues 425–445 (ISSRLGGGIVLVIASIVFSMM).

The protein belongs to the 2-hydroxycarboxylate transporter (2-HCT) (TC 2.A.24) family. Homodimer.

The protein resides in the cell inner membrane. It catalyses the reaction citrate(out) + 2 Na(+)(out) = citrate(in) + 2 Na(+)(in). Its function is as follows. Secondary active transporter that catalyzes the uptake of citrate across the membrane with the concomitant uptake of sodium. Is specific for citrate. This is Citrate/sodium symporter from Salmonella pullorum.